Here is an 86-residue protein sequence, read N- to C-terminus: Small ribosomal subunit protein bS20 (86 aa).

Over residues 1 to 18 (MANIKSQEKRIRTNERAR) the composition is skewed to basic and acidic residues. A disordered region spans residues 1–25 (MANIKSQEKRIRTNERARLRNQATK).

This sequence belongs to the bacterial ribosomal protein bS20 family.

In terms of biological role, binds directly to 16S ribosomal RNA. The polypeptide is Small ribosomal subunit protein bS20 (Mycobacteroides abscessus (strain ATCC 19977 / DSM 44196 / CCUG 20993 / CIP 104536 / JCM 13569 / NCTC 13031 / TMC 1543 / L948) (Mycobacterium abscessus)).